Reading from the N-terminus, the 857-residue chain is Dynein regulatory complex protein 11 (857 aa).

Residues 206–235 form the IQ domain; the sequence is TKLAALQIQKVWRGFHQCKKTVKEREEEMV. Residues 348-388 form a disordered region; sequence EEKLKKKKKKEDKENKGKKGKKEKKEKKEKKVSLKEKAMKD. Positions 365–375 are enriched in basic residues; that stretch reads KKGKKEKKEKK. Over residues 376–387 the composition is skewed to basic and acidic residues; it reads EKKVSLKEKAMK. 598–605 is a binding site for ATP; that stretch reads GPSGVGKK. The disordered stretch occupies residues 834-857; the sequence is SLTVGNKEKEKDKGKKGKRGKKKK. Positions 847 to 857 are enriched in basic residues; sequence GKKGKRGKKKK.

Belongs to the AAA ATPase family. DRC11 subfamily. As to quaternary structure, component of the nexin-dynein regulatory complex (N-DRC).

It localises to the cytoplasm. The protein localises to the cytoskeleton. It is found in the flagellum axoneme. Functionally, component of the nexin-dynein regulatory complex (N-DRC), a key regulator of ciliary/flagellar motility which maintains the alignment and integrity of the distal axoneme and regulates microtubule sliding in motile axonemes. The sequence is that of Dynein regulatory complex protein 11 (Iqca1) from Mus musculus (Mouse).